The primary structure comprises 143 residues: UPF0251 protein CA_C3166 (143 aa).

It belongs to the UPF0251 family.

The protein is UPF0251 protein CA_C3166 of Clostridium acetobutylicum (strain ATCC 824 / DSM 792 / JCM 1419 / IAM 19013 / LMG 5710 / NBRC 13948 / NRRL B-527 / VKM B-1787 / 2291 / W).